The sequence spans 813 residues: Disintegrin and metalloproteinase domain-containing protein 33 (813 aa).

A signal peptide spans 1–29 (MGWRPRRARGTPLLLLLLLLLLWPVPGAG). Residues 30–203 (VLQGHIPGQP…PGGPQSRGRR (174 aa)) constitute a propeptide that is removed on maturation. Over 30–701 (VLQGHIPGQP…GPVQAENHDT (672 aa)) the chain is Extracellular. Residue N109 is glycosylated (N-linked (GlcNAc...) asparagine). Positions 131 to 138 (CTCSGMSG) match the Cysteine switch motif. Residue C133 coordinates Zn(2+). N145 is a glycosylation site (N-linked (GlcNAc...) asparagine). The interval 184-205 (PGNKAGMTSLPGGPQSRGRREA) is disordered. The Peptidase M12B domain occupies 210 to 409 (KYLELYIVAD…GGGACLSNAP (200 aa)). N231 and N276 each carry an N-linked (GlcNAc...) asparagine glycan. Cystine bridges form between C320–C404, C360–C388, and C361–C371. H345 contacts Zn(2+). The active site involves E346. H349 and H355 together coordinate Zn(2+). One can recognise a Disintegrin domain in the interval 417 to 503 (PALCGNGFVE…HCPPDVYLLD (87 aa)). The N-linked (GlcNAc...) asparagine glycan is linked to N448. 4 cysteine pairs are disulfide-bonded: C475/C495, C653/C663, C657/C669, and C671/C680. The region spanning 649 to 681 (ELQRCLTACHSHGVCNSNHNCHCAPGWAPPFCD) is the EGF-like domain. Residues 702–722 (FLLAMLLSVLLPLLPGAGLAW) traverse the membrane as a helical segment. At 723–813 (CCYRLPGAHL…QVQMPRSCLW (91 aa)) the chain is on the cytoplasmic side. Positions 746–813 (SGPKDGPHRD…QVQMPRSCLW (68 aa)) are disordered. Over residues 780–791 (ENSHEPSSHPEK) the composition is skewed to basic and acidic residues.

Zn(2+) serves as cofactor. The precursor is cleaved by a furin endopeptidase. In terms of tissue distribution, expressed in all tissues, except liver, with high expression in placenta, lung, spleen and veins.

The protein localises to the membrane. In Homo sapiens (Human), this protein is Disintegrin and metalloproteinase domain-containing protein 33 (ADAM33).